The primary structure comprises 1622 residues: MGSMRKMSSSFKRGSIKSSTSGSQKGQKAWIEKTFCKRECIFVIPSTKDPNRCCCGQLTNQHIPPLPSGAPSTTGEDTKQADTQSGKWSVSKHTQSYPTDSYGILEFQGGGYSNKAMYIRVSYDTKPDSLLHLMVKDWQLELPKLLISVHGGLQSFEMQPKLKQVFGKGLIKAAMTTGAWIFTGGVSTGVVSHVGDALKDHSSKSRGRLCAIGIAPWGMVENKEDLIGKDVTRVYQTMSNPLSKLSVLNNSHTHFILADNGTLGKYGAEVKLRRQLEKHISLQKINTRLGQGVPVVGLVVEGGPNVVSIVLEYLKEDPPVPVVVCDGSGRASDILSFAHKYCDEGGVINESLRDQLLVTIQKTFNYSKSQSYQLFAIIMECMKKKELVTVFRMGSEGQQDVEMAILTALLKGTNASAPDQLSLALAWNRVDIARSQIFVFGPHWPPLGSLAPPVDTKATEKEKKPPTATTKGRGKGKGKKKGKVKEEVEEETDPRKLELLNWVNALEQAMLDALVLDRVDFVKLLIENGVNMQHFLTIPRLEELYNTRLGPPNTLHLLVRDVKKSNLPPDYHISLIDIGLVLEYLMGGAYRCNYTRKSFRTLYNNLFGPKRPKALKLLGMEDDEPPAKGKKKKKKKKEEEIDIDVDDPAVSRFQYPFHELMVWAVLMKRQKMAVFLWQRGEECMAKALVACKLYKAMAHESSESELVDDISQDLDNNSKDFGQLAVELLDQSYKHDEQVAMKLLTYELKNWSNSTCLKLAVAAKHRDFIAHTCSQMLLTDMWMGRLRMRKNPGLKVIMGILIPPTILFLEFRTYDDFSYQTSKENEDGKEKEEENVDANADAGSRKGDEENEHKKQRSIPIGTKICEFYNAPIVKFWFYTISYLGYLLLFNYVILVRMDGWPSPQEWIVISYIVSLALEKIREILMSEPGKLSQKIKVWLQEYWNITDLVAISMFMVGAILRLQSQPYMGYGRVIYCVDIILWYIRVLDIFGVNKYLGPYVMMIGKMMIDMLYFVVIMLVVLMSFGVARQAILHPEEKPSWKLARNIFYMPYWMIYGEVFADQIDLYAMEINPPCGENLYDEEGKRLPPCIPGAWLTPALMACYLLVANILLVNLLIAVFNNTFFEVKSISNQVWKFQRYQLIMTFHDRPVLPPPMIILSHIYIIIMRLSGRCRKKREGDQEERDRGLKLFLSDEELKKLHEFEEQCVQEHFREKEDEQQSSSDERIRVTSERVENMSMRLEEINERENFMKTSLQTVDLRLSQLEELSGRMVSALENLAGIDRSDLIQARSRASSECEATYLLRQSSINSADGYSLYRYHFNGEELLFEEPALSTSPGTAFRKKTYSFRVKDEDAKSHLDQPSNLHHTPGPSPPATPGRSRLALEGPLSTELRPGSDPGISAGEFDPRADFKSTEAAPSLNAAGVTGTQLTVESTDSHPLRESKLVRYYPGDPNTYKTMKSRSFVYTEGRKLVRGLSNWSAEYSSIMDQAWNATEWRCQVQRITRSRSTDIPYIVSEAASQDELEDEHRGSLLDPQISRSALTVSDRPEKENLLSVKPHQTLGFPCLRSRSLHGRPRSAEPAPSKLDRAGHASSTSNLAVMSVVPEGQNTQQEKRSAETEC.

Disordered stretches follow at residues 1 to 25, 64 to 95, 450 to 490, 618 to 641, and 822 to 856; these read MGSMRKMSSSFKRGSIKSSTSGSQK, PPLPSGAPSTTGEDTKQADTQSGKWSVSKHTQ, LAPP…EVEE, LGMEDDEPPAKGKKKKKKKKEEEI, and SKENEDGKEKEEENVDANADAGSRKGDEENEHKKQ. Residues 1–875 lie on the Cytoplasmic side of the membrane; sequence MGSMRKMSSS…CEFYNAPIVK (875 aa). The span at 8–25 shows a compositional bias: low complexity; that stretch reads SSSFKRGSIKSSTSGSQK. Polar residues predominate over residues 70 to 95; sequence APSTTGEDTKQADTQSGKWSVSKHTQ. The segment covering 472–483 has biased composition (basic residues); the sequence is GRGKGKGKKKGK. 2 stretches are compositionally biased toward basic and acidic residues: residues 823–832 and 843–853; these read KENEDGKEKE and GSRKGDEENEH. A helical transmembrane segment spans residues 876-896; the sequence is FWFYTISYLGYLLLFNYVILV. Residues 897 to 942 lie on the Extracellular side of the membrane; the sequence is RMDGWPSPQEWIVISYIVSLALEKIREILMSEPGKLSQKIKVWLQE. A helical transmembrane segment spans residues 943–963; it reads YWNITDLVAISMFMVGAILRL. Over 964 to 973 the chain is Cytoplasmic; the sequence is QSQPYMGYGR. The chain crosses the membrane as a helical span at residues 974-994; it reads VIYCVDIILWYIRVLDIFGVN. Topologically, residues 995–1006 are extracellular; it reads KYLGPYVMMIGK. The helical transmembrane segment at 1007–1027 threads the bilayer; it reads MMIDMLYFVVIMLVVLMSFGV. Over 1028–1099 the chain is Cytoplasmic; it reads ARQAILHPEE…CIPGAWLTPA (72 aa). A helical transmembrane segment spans residues 1100–1120; it reads LMACYLLVANILLVNLLIAVF. N-linked (GlcNAc...) asparagine glycosylation occurs at Asn-1121. Over 1121 to 1150 the chain is Extracellular; that stretch reads NNTFFEVKSISNQVWKFQRYQLIMTFHDRP. Residues 1151 to 1171 traverse the membrane as a helical segment; it reads VLPPPMIILSHIYIIIMRLSG. Topologically, residues 1172-1622 are cytoplasmic; it reads RCRKKREGDQ…QEKRSAETEC (451 aa). A coiled-coil region spans residues 1224–1252; it reads DERIRVTSERVENMSMRLEEINERENFMK. Disordered stretches follow at residues 1354 to 1383, 1389 to 1408, and 1567 to 1622; these read EDAKSHLDQPSNLHHTPGPSPPATPGRSRL, LSTELRPGSDPGISAGEFDP, and CLRS…ETEC. The segment covering 1613–1622 has biased composition (basic and acidic residues); it reads QEKRSAETEC.

This sequence belongs to the transient receptor (TC 1.A.4) family. LTrpC subfamily. TRPM1 sub-subfamily. As to quaternary structure, homodimer. Interacts with TRPM3; the interaction results in the formation of a heteromultimeric cation channel complex that are functionally different from the homomeric channels. Interacts with GPR179. Associates with both guanine nucleotide-binding proteins G(o) and beta-gamma G protein dimer; implicated in directly regulating TRPM1 channel open-state. Expressed in the retina where it localizes on dendritic tips of ON bipolar cells. Specifically, it is expressed in retinal bipolar cells (BPCs) of the ON subtype. Not detected in brain, lung, liver, heart, kidney, spleen or small intestine. Also expressed at high levels in poorly metastatic variants of B16 melanoma and at much reduced levels in highly metastatic variants of B16 melanoma.

It is found in the cell membrane. Its subcellular location is the endoplasmic reticulum membrane. The protein localises to the cell projection. It localises to the axon. It catalyses the reaction Ca(2+)(in) = Ca(2+)(out). The enzyme catalyses Mg(2+)(in) = Mg(2+)(out). The catalysed reaction is Mn(2+)(in) = Mn(2+)(out). It carries out the reaction Ni(2+)(in) = Ni(2+)(out). Inhibited by extracellular zinc ions. Inhibited by intracellular Mg(2+). Activated by the neuroactive steroid pregnenolone sulfate. Negatively regulated by activation of GRM6 receptors in the ON-bipolar cells. Functionally, constitutively open nonselective divalent cation-conducting channels which mediate the influx of Ca(2+), Mg(2+), Mn(2+), Ba(2+), and Ni(2+) into the cytoplasm, leading to membrane depolarization. Impermeable to zinc ions. In addition, forms heteromultimeric ion channels with TRPM3 which are permeable for calcium and zinc ions. Plays an essential role for the depolarizing photoresponse of retinal ON bipolar cells. In the dark, tonic release of glutamate activates the G-protein coupled receptor for glutamate (GRM6), its activation induces the release of G(o) and the beta-gamma G protein dimer. Both subunits can interact and inactivate the TRPM1 channel. A light onset, induces decrease in glutamate release and deactivation of GRM6 leading to channel opening and membrane depolarization. May play a role in metastasis suppression. This chain is Transient receptor potential cation channel subfamily M member 1, found in Mus musculus (Mouse).